A 473-amino-acid chain; its full sequence is Photosystem II CP43 reaction center protein (473 aa).

A propeptide spanning residues 1 to 14 (MKTLYSLRRFYHVE) is cleaved from the precursor. N-acetylthreonine is present on Thr-15. Residue Thr-15 is modified to Phosphothreonine. Helical transmembrane passes span 69-93 (LFEV…PHLA), 134-155 (LLGP…KDRN), 178-200 (KALY…RKIT), 255-275 (KPFA…LSYS), and 291-312 (WFNN…ASQA). Residue Glu-367 participates in [CaMn4O5] cluster binding. A helical transmembrane segment spans residues 447-471 (RARAAAAGFEKGIDRDFEPVLSMTP).

The protein belongs to the PsbB/PsbC family. PsbC subfamily. As to quaternary structure, PSII is composed of 1 copy each of membrane proteins PsbA, PsbB, PsbC, PsbD, PsbE, PsbF, PsbH, PsbI, PsbJ, PsbK, PsbL, PsbM, PsbT, PsbX, PsbY, PsbZ, Psb30/Ycf12, at least 3 peripheral proteins of the oxygen-evolving complex and a large number of cofactors. It forms dimeric complexes. Binds multiple chlorophylls and provides some of the ligands for the Ca-4Mn-5O cluster of the oxygen-evolving complex. It may also provide a ligand for a Cl- that is required for oxygen evolution. PSII binds additional chlorophylls, carotenoids and specific lipids. is required as a cofactor.

The protein resides in the plastid. It localises to the chloroplast thylakoid membrane. Its function is as follows. One of the components of the core complex of photosystem II (PSII). It binds chlorophyll and helps catalyze the primary light-induced photochemical processes of PSII. PSII is a light-driven water:plastoquinone oxidoreductase, using light energy to abstract electrons from H(2)O, generating O(2) and a proton gradient subsequently used for ATP formation. This chain is Photosystem II CP43 reaction center protein, found in Capsella bursa-pastoris (Shepherd's purse).